Here is a 257-residue protein sequence, read N- to C-terminus: Imidazole glycerol phosphate synthase subunit HisF (257 aa).

Residues Asp11 and Asp130 contribute to the active site.

This sequence belongs to the HisA/HisF family. Heterodimer of HisH and HisF.

It is found in the cytoplasm. The enzyme catalyses 5-[(5-phospho-1-deoxy-D-ribulos-1-ylimino)methylamino]-1-(5-phospho-beta-D-ribosyl)imidazole-4-carboxamide + L-glutamine = D-erythro-1-(imidazol-4-yl)glycerol 3-phosphate + 5-amino-1-(5-phospho-beta-D-ribosyl)imidazole-4-carboxamide + L-glutamate + H(+). The protein operates within amino-acid biosynthesis; L-histidine biosynthesis; L-histidine from 5-phospho-alpha-D-ribose 1-diphosphate: step 5/9. IGPS catalyzes the conversion of PRFAR and glutamine to IGP, AICAR and glutamate. The HisF subunit catalyzes the cyclization activity that produces IGP and AICAR from PRFAR using the ammonia provided by the HisH subunit. In Pseudoalteromonas translucida (strain TAC 125), this protein is Imidazole glycerol phosphate synthase subunit HisF.